We begin with the raw amino-acid sequence, 258 residues long: Myogenic factor 5 (258 aa).

Residues 21–50 (LSSPEGEFPEDFEPRELPPFGAPAPTEPAC) are disordered. The 52-residue stretch at 85 to 136 (DRRKAATMRERRRLKKVNQAFETLKRCTTANPNQRLPKVEILRNAIRYIESL) folds into the bHLH domain. The interval 220-258 (AEEPGLPLRHAGSLSPGASIDSGPGTPGSPPPRRTYQAL) is disordered.

In terms of assembly, efficient DNA binding requires dimerization with another bHLH protein.

It is found in the nucleus. In terms of biological role, acts as a transcriptional activator that promotes transcription of muscle-specific target genes and plays a role in muscle differentiation. Induces fibroblasts to differentiate into myoblasts. Probable sequence specific DNA-binding protein. The chain is Myogenic factor 5 (MYF5) from Gallus gallus (Chicken).